The following is a 444-amino-acid chain: UPF0053 protein YhdP (444 aa).

A CNNM transmembrane domain is found at 1-201; that stretch reads MDIVNLILVA…YKSGEINQSE (201 aa). 3 helical membrane passes run 7–27, 61–81, and 101–121; these read ILVA…FAII, ACQL…ESTI, and VISF…VGEL. 2 consecutive CBS domains span residues 220–282 and 284–344; these read MIPR…SVDS and ISQF…IRDE.

The protein belongs to the UPF0053 family.

The protein resides in the cell membrane. This is UPF0053 protein YhdP (yhdP) from Bacillus subtilis (strain 168).